Here is a 227-residue protein sequence, read N- to C-terminus: Uracil-DNA glycosylase (227 aa).

Asp68 acts as the Proton acceptor in catalysis.

This sequence belongs to the uracil-DNA glycosylase (UDG) superfamily. UNG family.

The protein localises to the cytoplasm. It carries out the reaction Hydrolyzes single-stranded DNA or mismatched double-stranded DNA and polynucleotides, releasing free uracil.. In terms of biological role, excises uracil residues from the DNA which can arise as a result of misincorporation of dUMP residues by DNA polymerase or due to deamination of cytosine. This Mycobacterium avium (strain 104) protein is Uracil-DNA glycosylase.